A 162-amino-acid chain; its full sequence is UPF0114 protein Shewmr4_0646 (162 aa).

The next 4 helical transmembrane spans lie at 15–35, 53–73, 108–128, and 136–156; these read IMAP…IKFF, LVLV…IVMV, KVAA…FMDV, and IMWY…MGYL.

This sequence belongs to the UPF0114 family.

Its subcellular location is the cell membrane. The protein is UPF0114 protein Shewmr4_0646 of Shewanella sp. (strain MR-4).